The following is a 208-amino-acid chain: Thymidylate kinase (208 aa).

12–19 is a binding site for ATP; the sequence is GVDGAGKS.

The protein belongs to the thymidylate kinase family.

It carries out the reaction dTMP + ATP = dTDP + ADP. Its function is as follows. Phosphorylation of dTMP to form dTDP in both de novo and salvage pathways of dTTP synthesis. The polypeptide is Thymidylate kinase (Bordetella bronchiseptica (strain ATCC BAA-588 / NCTC 13252 / RB50) (Alcaligenes bronchisepticus)).